The sequence spans 317 residues: Olfactory receptor 1B1 (317 aa).

The Extracellular segment spans residues 1-29 (MSFAPNASHSPVFLLLGFSRANISYTLLF). Asn-6 and Asn-22 each carry an N-linked (GlcNAc...) asparagine glycan. Residues 30-50 (FLFLAIYLTTILGNVTLVLLI) traverse the membrane as a helical segment. At 51-66 (SWDSRLHSPMYYLLRG) the chain is on the cytoplasmic side. A helical transmembrane segment spans residues 67 to 87 (LSVIDMGLSTVTLPQLLAHLV). Residues 88-98 (SHYPTIPAARC) lie on the Extracellular side of the membrane. A disulfide bridge connects residues Cys-98 and Cys-184. The chain crosses the membrane as a helical span at residues 99–119 (LAQFFFFYAFGVTDTLVIAVM). The Cytoplasmic segment spans residues 120 to 144 (ALDRYVAICDPLHYALVMNHQRCAC). The chain crosses the membrane as a helical span at residues 145–165 (LLALSWVVSILHTMLRVGLVL). The Extracellular portion of the chain corresponds to 166 to 201 (PLCWTGDAGGNVNLPHFFCDHRPLLRASCSDIHSNE). A helical membrane pass occupies residues 202-222 (LAIFFEGGFLMLGPCALIVLS). Topologically, residues 223–248 (YVRIGAAILRLPSAAGRRRAVSTCGS) are cytoplasmic. A helical transmembrane segment spans residues 249–269 (HLTMVGFLYGTIICVYFQPPF). Residues 270–276 (QNSQYQD) are Extracellular-facing. Residues 277-297 (MVASVMYTAITPLANPFVYSL) form a helical membrane-spanning segment. Residues 298 to 317 (HNKDVKGALCRLLEWVKVDP) are Cytoplasmic-facing.

It belongs to the G-protein coupled receptor 1 family.

The protein localises to the cell membrane. In terms of biological role, odorant receptor. The chain is Olfactory receptor 1B1 (OR1B1) from Homo sapiens (Human).